Here is a 191-residue protein sequence, read N- to C-terminus: dCTP deaminase, dUMP-forming (191 aa).

DCTP is bound by residues 101–106 (KSSLGR), Asp119, 127–129 (TLE), Gln148, Tyr162, and Gln174. The Proton donor/acceptor role is filled by Glu129. The disordered stretch occupies residues 163–191 (GSPVYGSRYQGQRGPTPSRSWQNFHRTKI). The span at 171-191 (YQGQRGPTPSRSWQNFHRTKI) shows a compositional bias: polar residues.

This sequence belongs to the dCTP deaminase family. In terms of assembly, homotrimer.

The enzyme catalyses dCTP + 2 H2O = dUMP + NH4(+) + diphosphate. The protein operates within pyrimidine metabolism; dUMP biosynthesis; dUMP from dCTP: step 1/1. Bifunctional enzyme that catalyzes both the deamination of dCTP to dUTP and the hydrolysis of dUTP to dUMP without releasing the toxic dUTP intermediate. The polypeptide is dCTP deaminase, dUMP-forming (Acidothermus cellulolyticus (strain ATCC 43068 / DSM 8971 / 11B)).